The primary structure comprises 163 residues: ATP synthase subunit b' (163 aa).

The helical transmembrane segment at 28–45 threads the bilayer; sequence LMAIQFLLLALILNATLY.

Belongs to the ATPase B chain family. F-type ATPases have 2 components, F(1) - the catalytic core - and F(0) - the membrane proton channel. F(1) has five subunits: alpha(3), beta(3), gamma(1), delta(1), epsilon(1). F(0) has four main subunits: a(1), b(1), b'(1) and c(10-14). The alpha and beta chains form an alternating ring which encloses part of the gamma chain. F(1) is attached to F(0) by a central stalk formed by the gamma and epsilon chains, while a peripheral stalk is formed by the delta, b and b' chains.

The protein localises to the cellular thylakoid membrane. In terms of biological role, f(1)F(0) ATP synthase produces ATP from ADP in the presence of a proton or sodium gradient. F-type ATPases consist of two structural domains, F(1) containing the extramembraneous catalytic core and F(0) containing the membrane proton channel, linked together by a central stalk and a peripheral stalk. During catalysis, ATP synthesis in the catalytic domain of F(1) is coupled via a rotary mechanism of the central stalk subunits to proton translocation. Its function is as follows. Component of the F(0) channel, it forms part of the peripheral stalk, linking F(1) to F(0). The b'-subunit is a diverged and duplicated form of b found in plants and photosynthetic bacteria. This Nostoc sp. (strain PCC 7120 / SAG 25.82 / UTEX 2576) protein is ATP synthase subunit b'.